Reading from the N-terminus, the 90-residue chain is Probable Fe(2+)-trafficking protein (90 aa).

This sequence belongs to the Fe(2+)-trafficking protein family.

Its function is as follows. Could be a mediator in iron transactions between iron acquisition and iron-requiring processes, such as synthesis and/or repair of Fe-S clusters in biosynthetic enzymes. This chain is Probable Fe(2+)-trafficking protein, found in Xylella fastidiosa (strain M23).